We begin with the raw amino-acid sequence, 917 residues long: Spermatogenesis-associated protein 31D4 (917 aa).

The helical transmembrane segment at 29–49 (FICLSGLGLFILYLFYMVLTL) threads the bilayer. Disordered stretches follow at residues 55–80 (EKNN…KDRK), 152–195 (SVSP…PPPL), and 773–798 (SQET…RSNS). Over residues 63-74 (HQGRARRKRKSV) the composition is skewed to basic residues. Over residues 152–163 (SVSPLASSASGA) the composition is skewed to low complexity. Residues 164–177 (ESSFTLASTPSATT) are compositionally biased toward polar residues. Residues 782-798 (LLHDPETSSDEDLRSNS) are compositionally biased toward basic and acidic residues.

This sequence belongs to the SPATA31 family.

It localises to the membrane. Functionally, may play a role in spermatogenesis. In Homo sapiens (Human), this protein is Spermatogenesis-associated protein 31D4 (SPATA31D4).